Reading from the N-terminus, the 174-residue chain is ATP synthase subunit delta, sodium ion specific (174 aa).

Belongs to the ATPase delta chain family. As to quaternary structure, F-type ATPases have 2 components, F(1) - the catalytic core - and F(0) - the membrane proton channel. F(1) has five subunits: alpha(3), beta(3), gamma(1), delta(1), epsilon(1). F(0) has three main subunits: a(1), b(2) and c(10-14). The alpha and beta chains form an alternating ring which encloses part of the gamma chain. F(1) is attached to F(0) by a central stalk formed by the gamma and epsilon chains, while a peripheral stalk is formed by the delta and b chains.

The protein resides in the cell inner membrane. Functionally, f(1)F(0) ATP synthase produces ATP from ADP in the presence of a proton or sodium gradient. F-type ATPases consist of two structural domains, F(1) containing the extramembraneous catalytic core and F(0) containing the membrane proton channel, linked together by a central stalk and a peripheral stalk. During catalysis, ATP synthesis in the catalytic domain of F(1) is coupled via a rotary mechanism of the central stalk subunits to proton translocation. Its function is as follows. This protein is part of the stalk that links CF(0) to CF(1). It either transmits conformational changes from CF(0) to CF(1) or is implicated in proton conduction. The polypeptide is ATP synthase subunit delta, sodium ion specific (Propionigenium modestum).